Here is a 727-residue protein sequence, read N- to C-terminus: ABC transporter G family member STR2 (727 aa).

The Cytoplasmic portion of the chain corresponds to 1 to 475; it reads MKTQGLELET…NFTNIRRTPE (475 aa). In terms of domain architecture, ABC transporter spans 25–275; it reads LEFESLTYTV…LNRMGRKIPK (251 aa). Residue 69-76 coordinates ATP; that stretch reads GPSGAGKS. A helical membrane pass occupies residues 476 to 496; sequence LFLSRLMVLTFMGVMMATMFH. Residues 497–510 lie on the Extracellular side of the membrane; the sequence is NPKNTLQGITNRLS. Residues 511–531 form a helical membrane-spanning segment; that stretch reads FFIFTVCLFFFSSNDAVPAFI. The Cytoplasmic portion of the chain corresponds to 532-559; the sequence is QERFIFIRETSHNAYRASCYTIASLITH. The helical transmembrane segment at 560–580 threads the bilayer; sequence MPFLALQALAYAAIVWFALEL. At 581-583 the chain is on the extracellular side; the sequence is RGP. The helical transmembrane segment at 584-604 threads the bilayer; it reads FIYFFLVLFISLLSTNSFVVF. At 605 to 612 the chain is on the cytoplasmic side; that stretch reads VSSIVPNY. The chain crosses the membrane as a helical span at residues 613-633; it reads ILGYAAVIAFTALFFLFCGYF. Topologically, residues 634–699 are extracellular; the sequence is LSSEDIPLYW…GTEEIKKRNN (66 aa). A glycan (N-linked (GlcNAc...) asparagine) is linked at Asn667. A helical transmembrane segment spans residues 700–720; that stretch reads VLIMLGWAVLYRILFYIILRF. At 721–727 the chain is on the cytoplasmic side; it reads ASKNQRS.

The protein belongs to the ABC transporter superfamily. ABCG family. Stunted arbuscule (STR) subfamily. As to quaternary structure, heterodimerizes with STR; the resulting transporter is located in the peri-arbuscular membrane. In terms of tissue distribution, expressed constitutively in the vascular tissue of roots.

It localises to the cell membrane. In terms of biological role, together with STR, required for arbuscule development in arbuscular mycorrhizal symbiosis. The protein is ABC transporter G family member STR2 of Medicago truncatula (Barrel medic).